Here is a 233-residue protein sequence, read N- to C-terminus: Probable fimbrial chaperone protein ElfD (233 aa).

The signal sequence occupies residues 1–26 (MKTCITKGIVTVSLTAILLSCSSAWA).

The protein belongs to the periplasmic pilus chaperone family.

It is found in the periplasm. Its function is as follows. Part of the elfADCG-ycbUVF fimbrial operon, which promotes adhesion of bacteria to different abiotic surfaces. Could be required for the biogenesis of the ElfA fimbriae. The chain is Probable fimbrial chaperone protein ElfD (elfD) from Escherichia coli (strain K12).